A 480-amino-acid polypeptide reads, in one-letter code: Endo-1,6-beta-D-glucanase (480 aa).

The signal sequence occupies residues 1 to 17 (MYPPALTLLLTPGLVAA). Asn50 carries an N-linked (GlcNAc...) asparagine glycan. Catalysis depends on Glu225, which acts as the Proton donor. Glu321 serves as the catalytic Nucleophile.

This sequence belongs to the glycosyl hydrolase 30 family.

The protein resides in the secreted. It catalyses the reaction Random hydrolysis of (1-&gt;6)-linkages in (1-&gt;6)-beta-D-glucans.. Its function is as follows. Partially degrades N.crassa cell wall beta-D-glucan, liberating small amounts of oligosaccharides. In Neurospora crassa (strain ATCC 24698 / 74-OR23-1A / CBS 708.71 / DSM 1257 / FGSC 987), this protein is Endo-1,6-beta-D-glucanase (neg-1).